Reading from the N-terminus, the 623-residue chain is MPHSDELDAGDVLAVENLNIAFMQEQQKIAAVRNLSFSLQRGETLAIVGESGSGKSVTALALMRLLEQAGGLVQCDKMLLQRRSREVIELSEQSAAQMRHVRGADMAMIFQEPMTSLNPVFAVGEQIAESIRLHQNASREEAMVEAKRMLDQVRIPEAQTILSRYPHQLSGGMRQRVMIAMALSCRPAVLIADEPTTALDVTIQAQILQLIKVLQKEMSMGVIFITHDMGVVAEIADRVLVMYQGEAVETGSVEQIFHAPQHPYTRALLAAVPQLGAMKGLDYPRRFPLISLEHPAKQEPPIEQKTVVDGEPVLRVRNLVTRFPLRSGLLNRVTREVHAVEKVSFDLWPGETLSLVGESGSGKSTTGRALLRLVESQGGEIIFNGQRIDTLSPCKLQALRRDIQFIFQDPYASLDPRQTIGDSIIEPLRVHGLLPGKEAAARVAWLLERVGLLPEHAWRYPHEFSGGQRQRICIARALALNPKVIIADEAVSALDVSIRGQIINLLLDLQRDFGIAYLFISHDMAVVERISHRVAVMYLGQIVEIGPRRAVFENPQHPYTRKLLAAVPVAEPSRQRPQRVLLSDDLPSNIHLRGEEVAAVSLQCVGPGHYVAQPQSEYAFMRR.

2 ABC transporter domains span residues 15-269 and 314-564; these read VENL…RALL and LRVR…RKLL. ATP is bound by residues 49-56 and 357-364; these read GESGSGKS.

This sequence belongs to the ABC transporter superfamily. Glutathione importer (TC 3.A.1.5.11) family. In terms of assembly, the complex is composed of two ATP-binding proteins (GsiA), two transmembrane proteins (GsiC and GsiD) and a solute-binding protein (GsiB).

Its subcellular location is the cell inner membrane. The enzyme catalyses glutathione(out) + ATP + H2O = glutathione(in) + ADP + phosphate + H(+). Functionally, part of the ABC transporter complex GsiABCD involved in glutathione import. Responsible for energy coupling to the transport system. The protein is Glutathione import ATP-binding protein GsiA of Escherichia coli O6:H1 (strain CFT073 / ATCC 700928 / UPEC).